We begin with the raw amino-acid sequence, 288 residues long: Bis(5'-nucleosyl)-tetraphosphatase, symmetrical (288 aa).

This sequence belongs to the Ap4A hydrolase family.

The catalysed reaction is P(1),P(4)-bis(5'-adenosyl) tetraphosphate + H2O = 2 ADP + 2 H(+). Its function is as follows. Hydrolyzes diadenosine 5',5'''-P1,P4-tetraphosphate to yield ADP. The sequence is that of Bis(5'-nucleosyl)-tetraphosphatase, symmetrical from Pseudomonas putida (strain ATCC 700007 / DSM 6899 / JCM 31910 / BCRC 17059 / LMG 24140 / F1).